A 131-amino-acid chain; its full sequence is Type-5 thionin (131 aa).

A signal peptide spans 1 to 29 (MGGGQKGLESAIVCLLVLGLVLEQVQVEG). Positions 67-131 (LASVRSSDEP…GDTLLASLDD (65 aa)) are cleaved as a propeptide — acidic domain.

This sequence belongs to the plant thionin (TC 1.C.44) family. Is disulfide-linked. As to expression, developing endosperm.

The protein resides in the secreted. In terms of biological role, thionins are small plant proteins which are toxic to animal cells. They seem to exert their toxic effect at the level of the cell membrane. Their precise function is not known. In Triticum aestivum (Wheat), this protein is Type-5 thionin (TTHV).